Consider the following 239-residue polypeptide: Aldehyde dehydrogenase, dimeric NADP-preferring (239 aa).

Residue C30 is part of the active site.

It belongs to the aldehyde dehydrogenase family. As to quaternary structure, homodimer.

It localises to the cytoplasm. It catalyses the reaction an aldehyde + NAD(+) + H2O = a carboxylate + NADH + 2 H(+). The catalysed reaction is octanal + NAD(+) + H2O = octanoate + NADH + 2 H(+). Functionally, ALDHs play a major role in the detoxification of alcohol-derived acetaldehyde. They are involved in the metabolism of corticosteroids, biogenic amines, neurotransmitters, and lipid peroxidation. Oxidizes medium and long chain aldehydes into non-toxic fatty acids. Preferentially oxidizes aromatic aldehyde substrates. Comprises about 50 percent of corneal epithelial soluble proteins. May play a role in preventing corneal damage caused by ultraviolet light. The protein is Aldehyde dehydrogenase, dimeric NADP-preferring (ALDH3A1) of Bos taurus (Bovine).